Here is a 412-residue protein sequence, read N- to C-terminus: MAFHCQRDCYATELLTEVVSCHPAQLKLENGGKKNTVSGFNVLLKDTVLFPEGGGQPDDRGFIGEVPVLRVIRQGPDAVHFVASPLDPATEVLVKIDWNRRFDHMQQHSGQHLVTAIADSLYGFKTTSWDLGRQRSVIELDTPLVTAEQVEAIEKVANQKIREHVPVHVRLITVDDPEFDMVRSRGLPDDHAGPVRIIDIEGVDANMCCGTHVRNLSDLQMIKILGTEKGKKNKTNLIFLSGERVLKYVSRSYNTEKTLTSLLKNGPEEHIEAVDKLQKSVKALQKNNLTLLRDLAVLTAENFKSKADRGKFFSLHRKEGDNEFMNIIANEIGTEDTLLFLTIGDEKTSGLFLLAGPPGIVEKFGPRVCEILDGKGAGKCGRFQGKANKMSQRAEVEVLLQKVISSVEITQE.

Residues His108, His112, Cys208, and His212 each coordinate Zn(2+).

Belongs to the class-II aminoacyl-tRNA synthetase family. Alax-L subfamily. It depends on Zn(2+) as a cofactor.

The protein localises to the cytoplasm. Functionally, functions in trans to edit the amino acid moiety from incorrectly charged tRNA(Ala). This is Alanyl-tRNA editing protein Aarsd1-B (aarsd1-b) from Xenopus laevis (African clawed frog).